Consider the following 201-residue polypeptide: Natural cytotoxicity triggering receptor 3 (201 aa).

Positions 1–18 are cleaved as a signal peptide; it reads MAWMLLLILIMVHPGSCA. Residues 19–126 form the Ig-like domain; it reads LWVSQPPEIR…VGTGNGTRLV (108 aa). Topologically, residues 19–135 are extracellular; the sequence is LWVSQPPEIR…VVEKEHPQLG (117 aa). Cys39 and Cys108 are joined by a disulfide. Residues Asn42 and Asn121 are each glycosylated (N-linked (GlcNAc...) asparagine). A helical transmembrane segment spans residues 136-156; the sequence is AGTVLLLRAGFYAVSFLSVAV. Residues 157–201 lie on the Cytoplasmic side of the membrane; the sequence is GSTVYYQGKCLTWKGPRRQLPAVVPAPLPPPCGSSAQLLPPVPGG.

It belongs to the natural cytotoxicity receptor (NCR) family. In terms of assembly, homodimer in the unliganted form. Interacts with CD3Z. Interacts with and is activated by binding to NCR3LG1. Interacts with and is activated by binding to BAG6. Interacts with and is inhibited by binding to LGALS3.

It is found in the cell membrane. Cell membrane receptor of natural killer/NK cells that is activated by binding of extracellular ligands including BAG6 and NCR3LG1. Stimulates NK cells cytotoxicity toward neighboring cells producing these ligands. It controls, for instance, NK cells cytotoxicity against tumor cells. Engagement of NCR3 by BAG6 also promotes myeloid dendritic cells (DC) maturation, both through killing DCs that did not acquire a mature phenotype, and inducing the release by NK cells of TNFA and IFNG that promote DC maturation. The polypeptide is Natural cytotoxicity triggering receptor 3 (NCR3) (Pan troglodytes (Chimpanzee)).